We begin with the raw amino-acid sequence, 2223 residues long: MAPKKEKGGTVNTSSKIWEPSLIAAQFNQNDWQASIAFVVGNQIEDDLLIQALTVAVQVPQRKLFSMVSWQDILQQINEINTLVGSASSKKAKKPVGGNAPLYYEVLTAAKAIMDSGEKLTLPLIGKLLKFQLLQIKFKDQQRRENEKKVIEDKPKLEKDKGKAKSPKEKKAPSAKPAKGKGKDQPEANAPVKKTTQLKRRGEDDHTNRYIDDEPDDGAQHYIIVVGFNNPQLLAIMAELGIPITSVIKISSENYEPLQTHLAAVNQQQEVLLQSEDLEAEKLKKENAIKELKTFWKYLEPVLNNEKPETNLFDVARLEYMVKAADFPSDWSDGEMMLKLGTDIFENIACLMYDILDWKRQHQHYLESMQLINVPQVVNEKPVLEAMPTSEAPQPAVPAPGKKKAQYEEPQAPPPVTSVITTEVDMRYYNYLLNPIREEFISVPLILHCMLEQVVATEEDLVPPSLREPSPRADGLDHRIAAHIVSLLPSLCLSEREKKNLHDIFLSEEENESKAVPKGPLLLNYHDAHAHKKYALQDQKNFDPVQIEQEMQSKLPLWEFLQFPLPPPWNNTKRLATIHELMHFCTSDVLSWNEVERAFKVFTFESLKLSEVDEKGKLKPSGMMCGSDSEMFNIPWDNPARFAKQIRQQYVMKMNTQEAKQKADIKIKDRTLFVDQNLSMSVQDNESNREPSDPSQCDANNMKHSDLNNLKLSVPDNRQLLEQESIMKAQPQHESLEQTTNNEIKDDAVTKADSHEKKPKKMMVEADLEDIKKTQQRSLMDWSFTEHFKPKVLLQVLQEAHKQYRCVDSYYHTQDNSLLLVFHNPMNRQRLHCEYWNIALHSNVGFRNYLELVAKSIQDWITKEEAIYQESKMNEKIIRTRAELELKSSANAKLTSASKIFSIKESKSNKGISKTEISDQEKEKEKEKIPFILEGSLKAWKEEQHRLAEEERLREEKKAEKKGKEAGKKKGKDNAEKEDSRSLKKKSPYKEKSKEEQVKIQEVTEESPHQPEPKITYPFHGYNMGNIPTQISGSNYYLYPSDGGQIEVEKTMFEKGPTFIKVRVVKDNHNFMIHLNDPKEIVKKEEKGDYYLEEEEEGDEEQSLETEVSDAKNKAFSKFGSFSATLENGICLSISYYGSNGMAPEDKDPDLETILNIPSALTPTVVPVIVTVPQSKAKGKIKGKEKPKESLKEEEHPKEEEKKEEEVEPEPVLQETLDVPTFQSLNVSCPSGLLLTFIGQESTGQYVIDEEPTWDIMVRQSYPQRVKHYEFYKTVMPPAEQEASRVITSQGTVVKYMLDGSTQILFADGAVSRSPNSGLICPPSEMPATPHSGDLMDSISQQKSETIPSEITNTKKGKSHKSQSSMAHKGEIHDPPPEAVQTVTPVEVHIGTWFTTTPEGNRIGTKGLERIADLTPLLSFQATDPVNGTVMTTREDKVVIVERKDGTRIVDHADGTRITTFYQVYEDQIILPDDQETTEGPRTVTRQVKCMRVESSRYATVIANCEDSSCCATFGDGTTIIAKPQGTYQVLPPNTGSLYIDKDCSAVYCHESSSNIYYPFQKREQLRAGRYIMRHTSEVICEVLDPEGNTFQVMADGSISTILPEKKLEDDLNEKTEGYDSLSSMHLEKNHQQIYGEHVPRFFVMYADGSGMELLRDSDIEEYLSLAYKESNTVVLQEPVQEQPGTLTITVLRPFHEASPWQVKKEDTIVPPNLRSRSWETFPSVEKKTPGPPFGTQIWKGLCIESKQLVSAPGAILKSPSVLQMRQFIQHEVIKNEVKLRLQVSLKDYINYILKKEDELQEMMVKDSRTEEERGNAADLLKLVMSFPKMEETTKSHVTEVAAHLTDLFKQSLATPPKCPPDTFGKDFFEKTWRHTASSKRWKEKIDKTRKEIETTQNYLMDIKNRIIPPFFKSELNQLYQSQYNHLDSLSKKLPSFTKKNEDANETAVQDTSDLNLDFKPHKVSEQKSSSVPSLPKPEISADKKDFTAQNQTENLTKSPEEAESYEPVKIPTQSLLQDVAGQTRKEKVKLPHYLLSSKPKSQPLAKVQDSVGGKVNTSSVASAAINNAKSSLFGFHLLPSSVKFGVLKEGHTYATVVKLKNVGVDFCRFKVKQPPPSTGLKVTYKPGPVAAGMQTELNIELFATAVGEDGAKGSAHISHNIEIMTEHEVLFLPVEATVLTSSNYDKRPKDFPQGKENPMVQRTSTIYSSTLGVFMSRKVSPH.

Basic and acidic residues-rich tracts occupy residues 144-172 and 200-212; these read RENE…EKKA and RRGE…RYID. Residues 144-214 are disordered; it reads RENEKKVIED…DHTNRYIDDE (71 aa). The stretch at 266–295 forms a coiled coil; the sequence is NQQQEVLLQSEDLEAEKLKKENAIKELKTF. 6 disordered regions span residues 387 to 416, 680 to 710, 731 to 762, 950 to 1015, 1179 to 1212, and 1345 to 1378; these read MPTS…PPPV, MSVQ…LNNL, PQHE…PKKM, EERL…EPKI, GKIK…PEPV, and ETIP…PPPE. 3 stretches are compositionally biased toward basic and acidic residues: residues 743-756, 950-999, and 1182-1205; these read EIKD…DSHE, EERL…EQVK, and KGKE…KKEE. Residues 940–966 adopt a coiled-coil conformation; that stretch reads WKEEQHRLAEEERLREEKKAEKKGKEA. A compositionally biased stretch (polar residues) spans 1345 to 1354; sequence ETIPSEITNT. A coiled-coil region spans residues 1874-1907; that stretch reads RHTASSKRWKEKIDKTRKEIETTQNYLMDIKNRI. Disordered regions lie at residues 1938–1957 and 1962–2008; these read TKKN…DLNL and HKVS…SYEP. The span at 1988-1998 shows a compositional bias: polar residues; sequence TAQNQTENLTK.

In terms of assembly, interacts (via the C-terminus) with SPAG6; the interaction probably occurs on polymerized microtubules. As to expression, highly expressed in testis. Expressed in organs that contain cilia-bearing cells including brain, oviduct, lung, and uterus.

It is found in the cytoplasm. The protein resides in the cytoskeleton. It localises to the flagellum axoneme. Its subcellular location is the cytoplasmic vesicle. The protein localises to the secretory vesicle. It is found in the acrosome. The protein resides in the golgi apparatus. Component of the central pair apparatus of ciliary axonemes. Plays a critical role in the function and structure of motile cilia. May play a role in endochondral bone formation, most likely because of a function in primary cilia of chondrocytes and osteoblasts. Essential for normal spermatogenesis and male fertility. Required for normal manchette structure, transport of proteins along the manchette microtubules and formation of the sperm head and flagellum. Essential for sperm flagellum development and proper assembly of the respiratory motile cilia central pair apparatus, but not the brain ependymal cilia. The polypeptide is Sperm-associated antigen 17 (SPAG17) (Homo sapiens (Human)).